Reading from the N-terminus, the 63-residue chain is Arabinogalactan protein 41 (63 aa).

The first 27 residues, 1 to 27, serve as a signal peptide directing secretion; that stretch reads MSGSRLFFGVSTIVSIIFAILLPMAHA. Pyrrolidone carboxylic acid is present on Gln-28. 3 positions are modified to 4-hydroxyproline: Pro-32, Pro-34, and Pro-36. O-linked (Ara...) hydroxyproline glycosylation is found at Pro-32, Pro-34, and Pro-36. Residue Ser-38 is the site of GPI-anchor amidated serine attachment. Positions 39-63 are cleaved as a propeptide — removed in mature form; the sequence is DGTTIDQGIAYVLMLVALVLTYLIH.

This sequence belongs to the AG-peptide AGP family. Post-translationally, contains 4-hydroxyproline; hydroxylated on Pro-32, Pro-34 and Pro-36. O-glycosylated on hydroxyprolines; noncontiguous hydroxylproline residues are glycosylated with arabinogalactan.

It is found in the cell membrane. Proteoglycan that seems to be implicated in diverse developmental roles such as differentiation, cell-cell recognition, embryogenesis and programmed cell death. In Arabidopsis thaliana (Mouse-ear cress), this protein is Arabinogalactan protein 41.